Here is a 254-residue protein sequence, read N- to C-terminus: MSFVLLSKMAKLKFNHIRHTIISTQKSTTIMPGISQLLNNRLIGKEFSSAVPTMFKREDYKLTIHDIAFSKWRNLIRHNDWKDFNNRKERVRRYRHEDLPPQRCTGLYELGVGVIGQDQGQNFDPDNNVLGVYVGQCVDVKSRLQDYGRRGGHLPSGLYEDIFSEGYSVFYRWAPEAAATEGMLLSTFDYAWNTCSNGERRHLELQKLGDPEFMSKRKSQVLVPSIRDQVVTIKVEKSNYTFLTSTLKVMRPFG.

The GIY-YIG domain maps to 103-152 (RCTGLYELGVGVIGQDQGQNFDPDNNVLGVYVGQCVDVKSRLQDYGRRGG).

The protein resides in the cytoplasm. This Arabidopsis thaliana (Mouse-ear cress) protein is Protein EFFECTOR OF TRANSCRIPTION 3.